The following is a 443-amino-acid chain: Thymidine phosphorylase (443 aa).

The protein belongs to the thymidine/pyrimidine-nucleoside phosphorylase family. In terms of assembly, homodimer.

It catalyses the reaction thymidine + phosphate = 2-deoxy-alpha-D-ribose 1-phosphate + thymine. It participates in pyrimidine metabolism; dTMP biosynthesis via salvage pathway; dTMP from thymine: step 1/2. Functionally, the enzymes which catalyze the reversible phosphorolysis of pyrimidine nucleosides are involved in the degradation of these compounds and in their utilization as carbon and energy sources, or in the rescue of pyrimidine bases for nucleotide synthesis. This Shewanella sp. (strain MR-7) protein is Thymidine phosphorylase.